A 379-amino-acid polypeptide reads, in one-letter code: Protein RecA (379 aa).

79 to 86 contacts ATP; that stretch reads GPESSGKT.

This sequence belongs to the RecA family.

The protein resides in the cytoplasm. In terms of biological role, can catalyze the hydrolysis of ATP in the presence of single-stranded DNA, the ATP-dependent uptake of single-stranded DNA by duplex DNA, and the ATP-dependent hybridization of homologous single-stranded DNAs. It interacts with LexA causing its activation and leading to its autocatalytic cleavage. The polypeptide is Protein RecA (Streptococcus agalactiae serotype III (strain NEM316)).